The sequence spans 224 residues: Synaptogyrin-2 (224 aa).

Position 1 is an N-acetylmethionine (Met1). Ser3 bears the Phosphoserine mark. Positions 20–171 constitute an MARVEL domain; the sequence is YVSQPQVVTR…LASLAYQRYK (152 aa). 4 helical membrane-spanning segments follow: residues 30 to 50, 73 to 93, 105 to 125, and 147 to 167; these read LVSM…GYIN, AIGV…AFFS, VIGD…GFCF, and AAIT…SLAY.

It belongs to the synaptogyrin family. Post-translationally, may be tyrosine phosphorylated by Src. In terms of tissue distribution, ubiquitously expressed with lower expression in brain (at protein level).

The protein localises to the cytoplasmic vesicle membrane. The protein resides in the cytoplasmic vesicle. Its subcellular location is the secretory vesicle. It is found in the synaptic vesicle membrane. In terms of biological role, may play a role in regulated exocytosis. In neuronal cells, modulates the localization of synaptophysin/SYP into synaptic-like microvesicles and may therefore play a role in the formation and/or the maturation of this vesicles. May also play a role in GLUT4 storage and transport to the plasma membrane. The chain is Synaptogyrin-2 from Rattus norvegicus (Rat).